Here is a 76-residue protein sequence, read N- to C-terminus: Large ribosomal subunit protein eL20 (76 aa).

This sequence belongs to the eukaryotic ribosomal protein eL20 family. As to quaternary structure, part of the 50S ribosomal subunit. Binds 23S rRNA.

The protein is Large ribosomal subunit protein eL20 of Methanocaldococcus jannaschii (strain ATCC 43067 / DSM 2661 / JAL-1 / JCM 10045 / NBRC 100440) (Methanococcus jannaschii).